A 375-amino-acid polypeptide reads, in one-letter code: Chaperone protein DnaJ (375 aa).

The J domain maps to 4 to 68; sequence DYYEILGVSR…ETRARYDRFG (65 aa). The CR-type zinc-finger motif lies at 134–216; sequence GGEKEIRIRH…CGGSGRKQET (83 aa). Residues cysteine 147, cysteine 150, cysteine 164, cysteine 167, cysteine 190, cysteine 193, cysteine 204, and cysteine 207 each contribute to the Zn(2+) site. CXXCXGXG motif repeat units lie at residues 147–154, 164–171, 190–197, and 204–211; these read CQVCEGSG, CSTCSGSG, CPTCNGSG, and CEACGGSG.

Belongs to the DnaJ family. In terms of assembly, homodimer. Zn(2+) is required as a cofactor.

The protein localises to the cytoplasm. Participates actively in the response to hyperosmotic and heat shock by preventing the aggregation of stress-denatured proteins and by disaggregating proteins, also in an autonomous, DnaK-independent fashion. Unfolded proteins bind initially to DnaJ; upon interaction with the DnaJ-bound protein, DnaK hydrolyzes its bound ATP, resulting in the formation of a stable complex. GrpE releases ADP from DnaK; ATP binding to DnaK triggers the release of the substrate protein, thus completing the reaction cycle. Several rounds of ATP-dependent interactions between DnaJ, DnaK and GrpE are required for fully efficient folding. Also involved, together with DnaK and GrpE, in the DNA replication of plasmids through activation of initiation proteins. In Gloeothece citriformis (strain PCC 7424) (Cyanothece sp. (strain PCC 7424)), this protein is Chaperone protein DnaJ.